Here is a 325-residue protein sequence, read N- to C-terminus: MIKLLYPEFWQKRNIIAYLLLPISLIYQFLGYLRASLARPIMLPAKVICVGNCSVGGTGKTQIVMYLAKLLRAKNVSFVIVTKAYGSNLKSATTIHQGHTALEVGDEGVILAKYGTVIATKNIKEILPLINELKPDIIIIDDFLQNPYFHKDFTIVSVDSQRLFGNGFLIPAGPLRQYPNKALDTADLIFLVSSTNDKIPNILTPYIDKLINAQIIPSSDVDKTKNYFAFSGIGNPERFFSTLKNYGLNITGYKIFPDHYNYLQADLENLYSLAKEHNATLITTRKDHIKFNDLNNNIVCLDVELSINNPDLLNEKIFKKAQIFN.

54–61 (SVGGTGKT) is an ATP binding site.

Belongs to the LpxK family.

It catalyses the reaction a lipid A disaccharide + ATP = a lipid IVA + ADP + H(+). It functions in the pathway glycolipid biosynthesis; lipid IV(A) biosynthesis; lipid IV(A) from (3R)-3-hydroxytetradecanoyl-[acyl-carrier-protein] and UDP-N-acetyl-alpha-D-glucosamine: step 6/6. Transfers the gamma-phosphate of ATP to the 4'-position of a tetraacyldisaccharide 1-phosphate intermediate (termed DS-1-P) to form tetraacyldisaccharide 1,4'-bis-phosphate (lipid IVA). The sequence is that of Tetraacyldisaccharide 4'-kinase from Rickettsia felis (strain ATCC VR-1525 / URRWXCal2) (Rickettsia azadi).